We begin with the raw amino-acid sequence, 156 residues long: Small ribosomal subunit protein uS7 (156 aa).

It belongs to the universal ribosomal protein uS7 family. Part of the 30S ribosomal subunit. Contacts proteins S9 and S11.

Functionally, one of the primary rRNA binding proteins, it binds directly to 16S rRNA where it nucleates assembly of the head domain of the 30S subunit. Is located at the subunit interface close to the decoding center, probably blocks exit of the E-site tRNA. This is Small ribosomal subunit protein uS7 from Prochlorococcus marinus (strain SARG / CCMP1375 / SS120).